Reading from the N-terminus, the 186-residue chain is dCTP deaminase, dUMP-forming (186 aa).

DCTP is bound by residues lysine 99 to arginine 104, aspartate 117, threonine 125 to glutamate 127, glutamine 146, tyrosine 159, lysine 166, and glutamine 170. The active-site Proton donor/acceptor is glutamate 127.

The protein belongs to the dCTP deaminase family. As to quaternary structure, homotrimer.

It catalyses the reaction dCTP + 2 H2O = dUMP + NH4(+) + diphosphate. The protein operates within pyrimidine metabolism; dUMP biosynthesis; dUMP from dCTP: step 1/1. In terms of biological role, bifunctional enzyme that catalyzes both the deamination of dCTP to dUTP and the hydrolysis of dUTP to dUMP without releasing the toxic dUTP intermediate. The polypeptide is dCTP deaminase, dUMP-forming (Methanosphaerula palustris (strain ATCC BAA-1556 / DSM 19958 / E1-9c)).